The primary structure comprises 711 residues: MPALACVDTSFVPPAYAFSDTAGDVFIPASSPTSAAVVVDRWSPSLSSSLYRIDGWGAPYFIANSSGNISVRPHGSETLPHQDIDLLKIVKKVTGPKSSGGLGLQLPLIVRFPDVLKNRLECLQSAFDYAIKSQGYDSHYQGVYPVKCNQDRFVVEDIVKFGSSFRFGLEAGSKPEILLAMSCLCKGSPDAFLVCNGFKDAEYISLALLGRKLALNTVIVLEQEEELDLVIELSQKMNVRPVIGLRAKLRTKHSGHFGSTSGEKGKFGLTTTQIVRVVRKLRQSGMLDCLQLLHFHIGSQIPSTSLLSDGVAEAAQLYCELVRLGAHMKVIDIGGGLGIDYDGSKSGESDLSVAYSLEEYAEAVVASVRVVCDRSSVKHPVICSESGRAIVSHHSVLIFEAVSADKPMVHQATPGDIQFLLEGNEEARANYEDLYAAVMRGDHESCLLYVDQLKQRCVEGFKEGVLSIEQLASVDGLCEWVLKAIGASDPVHTYNINLSVFTSIPDLWGIDQLFPIVPIHKLDQRPGARGILSDLTCDSDGKINKFIGGESSLPLHELDKNGSGGRYFLGMFLGGAYEEALGGVHNLFGGPSVVRVSQSDGPHSFAVTRAVPGQSSADVLRAMQHEPELMFQTLKHRAEEMMHTKGGSEGENEEEEEDDEFNNVAASLDRSFHNMPYLATEQASPSNSLSAAISNLGFYYCDEDVYDYISA.

At Lys147 the chain carries N6-(pyridoxal phosphate)lysine. 331-341 (IDIGGGLGIDY) contributes to the substrate binding site. The disordered stretch occupies residues 642-661 (MHTKGGSEGENEEEEEDDEF). Over residues 650-661 (GENEEEEEDDEF) the composition is skewed to acidic residues.

Belongs to the Orn/Lys/Arg decarboxylase class-II family. SpeA subfamily. As to quaternary structure, homodimer and heterodimer with ADC1. Requires pyridoxal 5'-phosphate as cofactor. Mg(2+) serves as cofactor.

The protein resides in the plastid. It is found in the chloroplast. It localises to the cytoplasm. Its subcellular location is the cytosol. It carries out the reaction L-arginine + H(+) = agmatine + CO2. The protein operates within amine and polyamine biosynthesis; agmatine biosynthesis; agmatine from L-arginine: step 1/1. Its function is as follows. Required for the biosynthesis of putrescine. Catalyzes the first step of polyamine (PA) biosynthesis to produce putrescine from arginine. Is a major contributor to basal arginine decarboxylase (ADC) activity and putrescine biosynthesis. Accumulation of putrescine plays a positive role in salt stress tolerance. Accumulation of putrescine plays a positive role in freezing tolerance. Production of PA is essential for normal seed development. Controls PA homeostasis which is crucial for normal plant growth and development. The sequence is that of Arginine decarboxylase 2 from Arabidopsis thaliana (Mouse-ear cress).